Here is a 195-residue protein sequence, read N- to C-terminus: Pyruvoyl-dependent arginine decarboxylase AaxB (195 aa).

Position 53 is a pyruvic acid (Ser) (Ser53).

This sequence belongs to the pyruvoyl-dependent arginine decarboxylase family. In terms of assembly, trimer of an alpha-beta dimer. Pyruvate serves as cofactor.

It is found in the cytoplasm. It catalyses the reaction L-arginine + H(+) = agmatine + CO2. Its activity is regulated as follows. Inhibited by argininamide. Functionally, part of the AaxABC system, catalyzes the decarboxylation of L-arginine. The arginine uptake by the bacterium in the macrophage may be a virulence factor against the host innate immune response. This is Pyruvoyl-dependent arginine decarboxylase AaxB (aaxB) from Chlamydia pneumoniae (Chlamydophila pneumoniae).